Here is a 391-residue protein sequence, read N- to C-terminus: G-patch domain-containing protein 1 (391 aa).

In terms of domain architecture, G-patch spans 15-61 (KDSAAFKLMKSMGWEEGEGLGKDKQGIKGYVRVTNKQDTSGVGLDKP). 2 disordered regions span residues 80–132 (VQAA…EKGK) and 212–307 (KASE…PAKR). 2 stretches are compositionally biased toward acidic residues: residues 92–102 (DDSDKEDESED) and 265–295 (NSDD…DDDK). Positions 305–312 (AKRKHDEI) match the Nuclear localization signal motif.

In terms of tissue distribution, strongly expressed in tissues with high cell proliferation activity that have a high demand for ribosome production such as shoot tips, leaves primordia, root tips and floral buds.

Its subcellular location is the nucleus. It localises to the nucleolus. In terms of biological role, involved in ribosome biogenesis, required for normal progression of rRNA processing. Seems to promote cell proliferation in leaves. The sequence is that of G-patch domain-containing protein 1 from Arabidopsis thaliana (Mouse-ear cress).